A 489-amino-acid chain; its full sequence is Pre-glycoprotein polyprotein GP complex (489 aa).

The N-myristoyl glycine; by host moiety is linked to residue Gly-2. Over 2 to 17 (GQIVTFFQEVPHILEE) the chain is Extracellular. Residues 18–33 (VMNIVLMTLSILAILK) form a helical membrane-spanning segment. The Cytoplasmic portion of the chain corresponds to 34-58 (GIYNVMTCGIIGLITFLFLCGRSCS). Cys-57 contacts Zn(2+). At 59–430 (SIYKDNYEFF…QSTTPLGLVD (372 aa)) the chain is on the extracellular side. Asn-78, Asn-88, Asn-98, Asn-108, Asn-118, and Asn-166 each carry an N-linked (GlcNAc...) asparagine; by host glycan. Disulfide bonds link Cys-85–Cys-229, Cys-117–Cys-154, Cys-179–Cys-210, Cys-277–Cys-290, Cys-299–Cys-308, and Cys-362–Cys-383. Residue Asn-222 is glycosylated (N-linked (GlcNAc...) asparagine; by host). Asn-363, Asn-371, Asn-388, and Asn-393 each carry an N-linked (GlcNAc...) asparagine; by host glycan. A helical membrane pass occupies residues 431–451 (LFVFSTSFYLISVFLHLIKIP). At 452–489 (THRHIKGKPCPKPHRLNHMAICSCGFYKQPGLPTQWKR) the chain is on the cytoplasmic side. Residues His-453, His-455, Cys-461, His-465, Cys-473, and Cys-475 each contribute to the Zn(2+) site.

It belongs to the arenaviridae GPC protein family. In terms of assembly, interacts with glycoprotein G2. Part of the GP complex (GP-C) together with glycoprotein G1 and glycoprotein G2. The GP-complex interacts with protein Z, which interacts with ribonucleocapsid; these interactions may induce virion budding. Homotrimer; disulfide-linked. In pre-fusion state, G1 homotrimers bind G2 homotrimers via ionic interactions. Part of the GP complex (GP-C) together with glycoprotein G2 and the stable signal peptide. The GP-complex interacts with protein Z, which interacts with ribonucleocapsid; these interactions may induce virion budding. As to quaternary structure, homotrimer. Interacts with the stable signal peptide. In pre-fusion state, G2 homotrimers bind G1 homotrimers via ionic interactions. Part of the GP complex (GP-C) together with glycoprotein G1 and the stable signal peptide. Acidification in the endosome triggers rearrangements, which ultimately leads to a 6 helix bundle formed by the two heptad repeat domains (HR1 and HR2) in post-fusion state. The GP-complex interacts with protein Z, which interacts with ribonucleocapsid; these interactions may induce virion budding. Specific enzymatic cleavages in vivo yield mature proteins. GP-C polyprotein is cleaved in the endoplasmic reticulum by the host protease MBTPS1. Only cleaved glycoprotein is incorporated into virions. Post-translationally, the SSP remains stably associated with the GP complex following cleavage by signal peptidase and plays crucial roles in the trafficking of GP through the secretory pathway. In terms of processing, myristoylation is necessary for GP2-mediated fusion activity.

It localises to the virion membrane. Its subcellular location is the host endoplasmic reticulum membrane. It is found in the host Golgi apparatus membrane. The protein localises to the host cell membrane. Its function is as follows. Functions as a cleaved signal peptide that is retained as the third component of the GP complex (GP-C). Helps to stabilize the spike complex in its native conformation. The SSP is required for efficient glycoprotein expression, post-translational maturation cleavage of G1 and G2, glycoprotein transport to the cell surface plasma membrane, formation of infectious virus particles, and acid pH-dependent glycoprotein-mediated cell fusion. Functionally, forms the virion spikes together with glycoprotein G2. The glycoprotein spike trimers are connected to the underlying matrix. Interacts with the host receptor leading to virus endocytosis. In terms of biological role, forms the virion spikes together with glycoprotein G1. The glycoprotein spike trimers are connected to the underlying matrix. Class I viral fusion protein that directs fusion of viral and host endosomal membranes, leading to delivery of the nucleocapsid into the cytoplasm. Membrane fusion is mediated by irreversible conformational changes induced by acidification. This chain is Pre-glycoprotein polyprotein GP complex, found in Mastomys natalensis (African soft-furred rat).